We begin with the raw amino-acid sequence, 113 residues long: Ribulose bisphosphate carboxylase small subunit (113 aa).

It belongs to the RuBisCO small chain family. In terms of assembly, heterohexadecamer of 8 large and 8 small subunits. RuBisCO interacts with the C-terminus of CcmM, and can be found in complexes that also include carbonic anhydrase (ccaA).

The protein localises to the carboxysome. Its function is as follows. RuBisCO catalyzes two reactions: the carboxylation of D-ribulose 1,5-bisphosphate, the primary event in carbon dioxide fixation, as well as the oxidative fragmentation of the pentose substrate in the photorespiration process. Both reactions occur simultaneously and in competition at the same active site. Although the small subunit is not catalytic it is essential for maximal activity. This chain is Ribulose bisphosphate carboxylase small subunit, found in Synechocystis sp. (strain ATCC 27184 / PCC 6803 / Kazusa).